A 245-amino-acid chain; its full sequence is 1-(5-phosphoribosyl)-5-[(5-phosphoribosylamino)methylideneamino] imidazole-4-carboxamide isomerase (245 aa).

The active-site Proton acceptor is the Asp-8. Asp-130 functions as the Proton donor in the catalytic mechanism.

Belongs to the HisA/HisF family.

It is found in the cytoplasm. The catalysed reaction is 1-(5-phospho-beta-D-ribosyl)-5-[(5-phospho-beta-D-ribosylamino)methylideneamino]imidazole-4-carboxamide = 5-[(5-phospho-1-deoxy-D-ribulos-1-ylimino)methylamino]-1-(5-phospho-beta-D-ribosyl)imidazole-4-carboxamide. The protein operates within amino-acid biosynthesis; L-histidine biosynthesis; L-histidine from 5-phospho-alpha-D-ribose 1-diphosphate: step 4/9. The polypeptide is 1-(5-phosphoribosyl)-5-[(5-phosphoribosylamino)methylideneamino] imidazole-4-carboxamide isomerase (Pseudomonas syringae pv. tomato (strain ATCC BAA-871 / DC3000)).